Here is a 338-residue protein sequence, read N- to C-terminus: Biotin synthase (338 aa).

The region spanning 63-290 is the Radical SAM core domain; that stretch reads NGVQLSTLLS…RAKVRLSAGR (228 aa). Residues Cys78, Cys82, and Cys85 each contribute to the [4Fe-4S] cluster site. [2Fe-2S] cluster is bound by residues Cys122, Cys153, Cys213, and Arg285.

The protein belongs to the radical SAM superfamily. Biotin synthase family. Homodimer. The cofactor is [4Fe-4S] cluster. [2Fe-2S] cluster serves as cofactor.

It catalyses the reaction (4R,5S)-dethiobiotin + (sulfur carrier)-SH + 2 reduced [2Fe-2S]-[ferredoxin] + 2 S-adenosyl-L-methionine = (sulfur carrier)-H + biotin + 2 5'-deoxyadenosine + 2 L-methionine + 2 oxidized [2Fe-2S]-[ferredoxin]. The protein operates within cofactor biosynthesis; biotin biosynthesis; biotin from 7,8-diaminononanoate: step 2/2. Its function is as follows. Catalyzes the conversion of dethiobiotin (DTB) to biotin by the insertion of a sulfur atom into dethiobiotin via a radical-based mechanism. This Nitrosomonas eutropha (strain DSM 101675 / C91 / Nm57) protein is Biotin synthase.